A 179-amino-acid chain; its full sequence is Replication restart protein DnaT (179 aa).

The segment at 156 to 179 (GGLPKRDVNTVSEPDSQIPPGFRG) is disordered.

It belongs to the DnaT family. In terms of assembly, homooligomerizes. Interacts with PriB. Component of the replication restart primosome. Primosome assembly occurs via a 'hand-off' mechanism. PriA binds to replication forks, subsequently PriB then DnaT bind; DnaT then displaces ssDNA to generate the helicase loading substrate.

Functionally, involved in the restart of stalled replication forks, which reloads the replicative helicase on sites other than the origin of replication. Can function in multiple replication restart pathways. Displaces ssDNA from a PriB-ssDNA complex. Probably forms a spiral filament on ssDNA. The protein is Replication restart protein DnaT of Shigella boydii serotype 18 (strain CDC 3083-94 / BS512).